We begin with the raw amino-acid sequence, 459 residues long: NADH-ubiquinone oxidoreductase chain 4 (459 aa).

13 consecutive transmembrane segments (helical) span residues 22-42 (HLSY…LQWL), 61-81 (PIST…ILVS), 94-113 (RTFT…AFSA), 114-134 (LEMM…LIII), 146-166 (AGTY…IALT), 197-217 (WFAL…HLWL), 225-245 (PIAG…YGII), 258-278 (LSYP…LICL), 285-304 (SLIA…AALL), 308-330 (LSIT…LFCL), 352-372 (LLPL…ALPP), 380-400 (LTII…TGLG), and 437-457 (LIMM…QLMT).

This sequence belongs to the complex I subunit 4 family.

The protein localises to the mitochondrion membrane. The catalysed reaction is a ubiquinone + NADH + 5 H(+)(in) = a ubiquinol + NAD(+) + 4 H(+)(out). In terms of biological role, core subunit of the mitochondrial membrane respiratory chain NADH dehydrogenase (Complex I) that is believed to belong to the minimal assembly required for catalysis. Complex I functions in the transfer of electrons from NADH to the respiratory chain. The immediate electron acceptor for the enzyme is believed to be ubiquinone. The polypeptide is NADH-ubiquinone oxidoreductase chain 4 (MT-ND4) (Pelomedusa subrufa (African side-necked turtle)).